Here is a 141-residue protein sequence, read N- to C-terminus: Large ribosomal subunit protein uL11 (141 aa).

Belongs to the universal ribosomal protein uL11 family. In terms of assembly, part of the ribosomal stalk of the 50S ribosomal subunit. Interacts with L10 and the large rRNA to form the base of the stalk. L10 forms an elongated spine to which L12 dimers bind in a sequential fashion forming a multimeric L10(L12)X complex. In terms of processing, one or more lysine residues are methylated.

Forms part of the ribosomal stalk which helps the ribosome interact with GTP-bound translation factors. The polypeptide is Large ribosomal subunit protein uL11 (Prosthecochloris aestuarii (strain DSM 271 / SK 413)).